A 187-amino-acid polypeptide reads, in one-letter code: Elongation factor P (187 aa).

The protein belongs to the elongation factor P family.

The protein resides in the cytoplasm. It participates in protein biosynthesis; polypeptide chain elongation. Functionally, involved in peptide bond synthesis. Stimulates efficient translation and peptide-bond synthesis on native or reconstituted 70S ribosomes in vitro. Probably functions indirectly by altering the affinity of the ribosome for aminoacyl-tRNA, thus increasing their reactivity as acceptors for peptidyl transferase. The protein is Elongation factor P of Erythrobacter litoralis (strain HTCC2594).